Here is a 95-residue protein sequence, read N- to C-terminus: Large ribosomal subunit protein bL25 (95 aa).

The protein belongs to the bacterial ribosomal protein bL25 family. As to quaternary structure, part of the 50S ribosomal subunit; part of the 5S rRNA/L5/L18/L25 subcomplex. Contacts the 5S rRNA. Binds to the 5S rRNA independently of L5 and L18.

This is one of the proteins that binds to the 5S RNA in the ribosome where it forms part of the central protuberance. This chain is Large ribosomal subunit protein bL25, found in Shewanella frigidimarina (strain NCIMB 400).